The following is a 114-amino-acid chain: uncharacterized protein (114 aa).

3 helical membrane passes run 38–60 (PLWF…TAGI), 64–86 (YAAI…AHMF), and 91–113 (SVIM…MGSY).

It is found in the cell membrane. This is an uncharacterized protein from Bacillus subtilis (strain 168).